A 122-amino-acid chain; its full sequence is Serum amyloid A-1 protein (122 aa).

Positions 1–18 are cleaved as a signal peptide; the sequence is MKLLTGLVFCSLVLGVSS. Residues 19–45 are important for amyloid formation; forms amyloid fibrils in vitro; that stretch reads RSFFSFLGEAFDGARDMWRAYSDMREA. The propeptide at 95-122 is often cleaved during amyloidogenesis; that stretch reads LADQAANEWGRSGKDPNHFRPAGLPEKY. The tract at residues 98–122 is disordered; it reads QAANEWGRSGKDPNHFRPAGLPEKY. Asn-101 is modified (N4,N4-dimethylasparagine).

Belongs to the SAA family. In terms of assembly, homohexamer; dimer of trimers. Can form amyloid fibrils after partial proteolysis; the native, undenatured protein does not form amyloid fibrils (in vitro). Apolipoprotein of the HDL complex. Binds to heparin. Post-translationally, this protein is the precursor of amyloid protein A, which is formed by the removal of approximately 24 residues from the C-terminal end. As to expression, expressed by the liver; secreted in plasma (at protein level).

Its subcellular location is the secreted. In terms of biological role, major acute phase protein. The chain is Serum amyloid A-1 protein (SAA1) from Homo sapiens (Human).